A 130-amino-acid polypeptide reads, in one-letter code: MLESSVVGIGKWVVEDYIFVGLFFVVACFISCVMLALPVFIAPSSHERHKGDSYECGFDKLSSTGERFNVRFYLVGILFIIFDLEIIFLFPWAVSARELGPAAFVSVLIFLIILTVGFVYEFVSGALDWR.

3 consecutive transmembrane segments (helical) span residues 17–37, 74–94, and 99–119; these read YIFV…MLAL, LVGI…PWAV, and LGPA…VGFV.

The protein belongs to the complex I subunit 3 family. In terms of assembly, NDH-1 is composed of 14 different subunits. Subunits NuoA, H, J, K, L, M, N constitute the membrane sector of the complex.

It is found in the cell inner membrane. It carries out the reaction a quinone + NADH + 5 H(+)(in) = a quinol + NAD(+) + 4 H(+)(out). Functionally, NDH-1 shuttles electrons from NADH, via FMN and iron-sulfur (Fe-S) centers, to quinones in the respiratory chain. The immediate electron acceptor for the enzyme in this species is believed to be ubiquinone. Couples the redox reaction to proton translocation (for every two electrons transferred, four hydrogen ions are translocated across the cytoplasmic membrane), and thus conserves the redox energy in a proton gradient. The polypeptide is NADH-quinone oxidoreductase subunit A (Neorickettsia sennetsu (strain ATCC VR-367 / Miyayama) (Ehrlichia sennetsu)).